A 400-amino-acid polypeptide reads, in one-letter code: Trans-enoyl reductase ucsL (400 aa).

50 to 53 (TDHK) contacts NADP(+). 145-152 (SVHGSVAL) is a substrate binding site. Residues 204-207 (STAC), 227-230 (SPRN), tyrosine 245, and 292-293 (LE) contribute to the NADP(+) site. 313–317 (GPVMF) is a substrate binding site. Residue 389–390 (VS) coordinates NADP(+).

Belongs to the zinc-containing alcohol dehydrogenase family. Monomer.

It functions in the pathway mycotoxin biosynthesis. Its function is as follows. Trans-enoyl reductase; part of the gene cluster that mediates the biosynthesis of UCS1025A, a member of the pyrrolizidinone family that acts as a strong telomerase inhibitor and displays potent antibacterial and antitumor properties. These compounds share a hemiaminal-containing pyrrolizidinone core fused with a gamma-lactone, giving a furopyrrolizidine that is connected to a decalin fragment. The polyketide synthase module (PKS) of the PKS-NRPS ucsA is responsible for the synthesis of the polyketide backbone via the condensation of an acetyl-CoA starter unit with 6 malonyl-CoA units. The downstream nonribosomal peptide synthetase (NRPS) module then amidates the carboxyl end of the polyketide with a 2S,3S-methylproline derived from L-isoleucine by the 2-oxoglutarate-dependent dioxygenase ucsF which converts L-isoleucine to (4S,5S)-4-methylpyrroline-5-carboxylate that is further converted to 2S,3S-methylproline by the pyrroline-5-carboxylate reductase ucsG. Reductive release of the completed aminoacyl polyketide from the assembly line can form the 3-pyrrolin-2-one structure via an intramolecular Knoevenagel reaction. Because ucsA lacks a designated enoylreductase (ER) domain, the required activity is provided the enoyl reductase ucsL. This keto acyclic precursor is the substrate of the Diels-Alderase ucsH, that catalyzes the Diels-Alder cycloaddition. Oxidation of the 3S-methyl group to a carboxylate by the cytochrome P450 monooxygenase ucsK allows an oxa-Michael cyclization that might involve the reductase/dehydrogenase ucsI and which furnishes the furopyrrolizidine. The oxidase ucsJ likely plays a critical role in stereoselective reduction of the C5-C6 double bond to afford the required R-configured carboxylate group. Further enolization and oxidation at C5 by an unidentified enzyme affords the last intermediate that can undergo oxa-Michael cyclization to yield UCS1025A. In Acremonium sp, this protein is Trans-enoyl reductase ucsL.